We begin with the raw amino-acid sequence, 430 residues long: Enolase (430 aa).

Glutamine 164 contacts (2R)-2-phosphoglycerate. Glutamate 206 serves as the catalytic Proton donor. The Mg(2+) site is built by aspartate 243, glutamate 286, and aspartate 313. Positions 338, 367, 368, and 389 each coordinate (2R)-2-phosphoglycerate. Catalysis depends on lysine 338, which acts as the Proton acceptor.

The protein belongs to the enolase family. In terms of assembly, component of the RNA degradosome, a multiprotein complex involved in RNA processing and mRNA degradation. Requires Mg(2+) as cofactor.

It localises to the cytoplasm. The protein resides in the secreted. It is found in the cell surface. The catalysed reaction is (2R)-2-phosphoglycerate = phosphoenolpyruvate + H2O. It participates in carbohydrate degradation; glycolysis; pyruvate from D-glyceraldehyde 3-phosphate: step 4/5. In terms of biological role, catalyzes the reversible conversion of 2-phosphoglycerate (2-PG) into phosphoenolpyruvate (PEP). It is essential for the degradation of carbohydrates via glycolysis. This is Enolase from Dichelobacter nodosus (strain VCS1703A).